Reading from the N-terminus, the 157-residue chain is MSRRRGKVEPRKITPDPVYNDVQVAKFINCLMLSGEKSVAERLFYDALEIIQKKTGNDPYTTFREALENAKPQVEVKSRRVGGVTYQVPIEVRPERRLALGIRWLIRYSRDRNEKGMASKLAAEFIEAQKGTGSAIKKKEDIRKMAEANKAFSHYRW.

This sequence belongs to the universal ribosomal protein uS7 family. Part of the 30S ribosomal subunit. Contacts proteins S9 and S11.

One of the primary rRNA binding proteins, it binds directly to 16S rRNA where it nucleates assembly of the head domain of the 30S subunit. Is located at the subunit interface close to the decoding center, probably blocks exit of the E-site tRNA. This Leptospira borgpetersenii serovar Hardjo-bovis (strain JB197) protein is Small ribosomal subunit protein uS7.